The primary structure comprises 315 residues: Putative protein phosphatase 2C 24 (315 aa).

A PPM-type phosphatase domain is found at 71–314 (ALRMEAASCF…DDITVVVAYI (244 aa)). The Mn(2+) site is built by Asp-102, Gly-103, Asp-238, and Asp-305.

Belongs to the PP2C family. Mg(2+) is required as a cofactor. It depends on Mn(2+) as a cofactor.

It catalyses the reaction O-phospho-L-seryl-[protein] + H2O = L-seryl-[protein] + phosphate. The catalysed reaction is O-phospho-L-threonyl-[protein] + H2O = L-threonyl-[protein] + phosphate. The sequence is that of Putative protein phosphatase 2C 24 from Oryza sativa subsp. japonica (Rice).